Consider the following 1420-residue polypeptide: tRNA (32-2'-O)-methyltransferase regulator TRM732 (1420 aa).

The interval Arg748–Pro754 is required for activity.

This sequence belongs to the THADA family. Interacts with TRM7; for 2'-O-methylation of position 32 in substrate tRNAs.

The protein resides in the cytoplasm. Its function is as follows. Together with methyltransferase TRM7, methylates the 2'-O-ribose of nucleotides at position 32 of the anticodon loop of substrate tRNAs. This Saccharomyces cerevisiae (strain ATCC 204508 / S288c) (Baker's yeast) protein is tRNA (32-2'-O)-methyltransferase regulator TRM732 (TRM732).